A 605-amino-acid chain; its full sequence is 9-cis-epoxycarotenoid dioxygenase NCED1, chloroplastic (605 aa).

The transit peptide at 1-16 (MATTTSHATNTWIKTK) directs the protein to the chloroplast. Positions 55 to 89 (ILHFPKQSSNYQTPKNNTISHPKQENNNSSSSSTS) are disordered. Residues 60–75 (KQSSNYQTPKNNTISH) are compositionally biased toward polar residues. Low complexity predominate over residues 80–89 (NNNSSSSSTS). His-302, His-351, His-416, and His-592 together coordinate Fe cation.

The protein belongs to the carotenoid oxygenase family. The cofactor is Fe(2+). As to expression, expressed in developing and ripening fruits. Highly expressed in pulp. Observed in unpollinated ovaries (e.g. ovules, placenta and pericarp). Expressed in flowers.

Its subcellular location is the plastid. It localises to the chloroplast stroma. It catalyses the reaction a 9-cis-epoxycarotenoid + O2 = a 12'-apo-carotenal + 2-cis,4-trans-xanthoxin. The enzyme catalyses 9-cis-violaxanthin + O2 = (3S,5R,6S)-5,6-epoxy-3-hydroxy-5,6-dihydro-12'-apo-beta-caroten-12'-al + 2-cis,4-trans-xanthoxin. It carries out the reaction 9'-cis-neoxanthin + O2 = (3S,5R,6R)-3,5-dihydroxy-6,7-didehydro-5,6-dihydro-12'-apo-beta-caroten-12'-al + 2-cis,4-trans-xanthoxin. The protein operates within plant hormone biosynthesis; abscisate biosynthesis. Functionally, has a 11,12(11',12') 9-cis epoxycarotenoid cleavage activity. Catalyzes the first step of abscisic-acid (ABA) biosynthesis from carotenoids. Required for ABA accumulation upon drought. Required for ABA-mediated regulation of anther/pollen development, including metabolism, cell wall modification and transcription level. Positive regulator of fruit ripening involved in the biosynthesis of abscisic acid (ABA); initiates ABA biosynthesis at the onset of fruit ripening. Modulates the degree of pigmentation and carotenoid composition as well as pectin catabolism during ripening and may regulate the ethylene production and action in climacteric tomato fruit. This chain is 9-cis-epoxycarotenoid dioxygenase NCED1, chloroplastic, found in Solanum lycopersicum (Tomato).